The chain runs to 569 residues: Proline--tRNA ligase (569 aa).

This sequence belongs to the class-II aminoacyl-tRNA synthetase family. ProS type 1 subfamily. In terms of assembly, homodimer.

Its subcellular location is the cytoplasm. It carries out the reaction tRNA(Pro) + L-proline + ATP = L-prolyl-tRNA(Pro) + AMP + diphosphate. Catalyzes the attachment of proline to tRNA(Pro) in a two-step reaction: proline is first activated by ATP to form Pro-AMP and then transferred to the acceptor end of tRNA(Pro). As ProRS can inadvertently accommodate and process non-cognate amino acids such as alanine and cysteine, to avoid such errors it has two additional distinct editing activities against alanine. One activity is designated as 'pretransfer' editing and involves the tRNA(Pro)-independent hydrolysis of activated Ala-AMP. The other activity is designated 'posttransfer' editing and involves deacylation of mischarged Ala-tRNA(Pro). The misacylated Cys-tRNA(Pro) is not edited by ProRS. The protein is Proline--tRNA ligase of Dehalococcoides mccartyi (strain ATCC BAA-2266 / KCTC 15142 / 195) (Dehalococcoides ethenogenes (strain 195)).